A 453-amino-acid polypeptide reads, in one-letter code: tRNA modification GTPase MnmE (453 aa).

(6S)-5-formyl-5,6,7,8-tetrahydrofolate contacts are provided by Arg-22, Glu-79, and Lys-119. A TrmE-type G domain is found at 215–376 (GMKVVIAGRP…LKQHLKSLMG (162 aa)). Asn-225 is a binding site for K(+). GTP contacts are provided by residues 225-230 (NAGKSS), 244-250 (TEIAGTT), 269-272 (DTAG), and 334-337 (NKAD). Ser-229 serves as a coordination point for Mg(2+). The K(+) site is built by Thr-244, Ile-246, and Thr-249. A Mg(2+)-binding site is contributed by Thr-250. Lys-453 serves as a coordination point for (6S)-5-formyl-5,6,7,8-tetrahydrofolate.

Belongs to the TRAFAC class TrmE-Era-EngA-EngB-Septin-like GTPase superfamily. TrmE GTPase family. Homodimer. Heterotetramer of two MnmE and two MnmG subunits. K(+) serves as cofactor.

It localises to the cytoplasm. Functionally, exhibits a very high intrinsic GTPase hydrolysis rate. Involved in the addition of a carboxymethylaminomethyl (cmnm) group at the wobble position (U34) of certain tRNAs, forming tRNA-cmnm(5)s(2)U34. The polypeptide is tRNA modification GTPase MnmE (Shewanella sp. (strain MR-7)).